The primary structure comprises 198 residues: Recombination protein RecR (198 aa).

Residues 57-72 (CEKCNTFTEAQICEVC) form a C4-type zinc finger. The 96-residue stretch at 80–175 (TLLCVVETPA…AVTRLARGVP (96 aa)) folds into the Toprim domain.

This sequence belongs to the RecR family.

May play a role in DNA repair. It seems to be involved in an RecBC-independent recombinational process of DNA repair. It may act with RecF and RecO. This chain is Recombination protein RecR, found in Burkholderia ambifaria (strain MC40-6).